We begin with the raw amino-acid sequence, 388 residues long: DNA replication and repair protein RecF (388 aa).

30–37 (GNNAQGKS) is a binding site for ATP.

This sequence belongs to the RecF family.

The protein localises to the cytoplasm. Its function is as follows. The RecF protein is involved in DNA metabolism; it is required for DNA replication and normal SOS inducibility. RecF binds preferentially to single-stranded, linear DNA. It also seems to bind ATP. This chain is DNA replication and repair protein RecF, found in Picosynechococcus sp. (strain ATCC 27264 / PCC 7002 / PR-6) (Agmenellum quadruplicatum).